The chain runs to 184 residues: Vacuolar protein sorting-associated protein 68 (184 aa).

An N-acetylmethionine modification is found at methionine 1. Serine 8 carries the post-translational modification Phosphoserine. The helical transmembrane segment at glycine 26–leucine 46 threads the bilayer. Asparagine 52 is a glycosylation site (N-linked (GlcNAc...) asparagine). Helical transmembrane passes span valine 56–valine 76, leucine 115–isoleucine 135, and methionine 150–isoleucine 170.

Belongs to the UPF0220 family.

The protein resides in the vacuole membrane. The protein localises to the mitochondrion. Functionally, involved in vacuolar protein sorting. In Saccharomyces cerevisiae (strain ATCC 204508 / S288c) (Baker's yeast), this protein is Vacuolar protein sorting-associated protein 68 (VPS68).